The chain runs to 384 residues: S-adenosylmethionine synthase (384 aa).

His15 serves as a coordination point for ATP. Residue Asp17 coordinates Mg(2+). A K(+)-binding site is contributed by Glu43. L-methionine-binding residues include Glu56 and Gln99. The tract at residues 99–109 (QSADINQGVDR) is flexible loop. ATP is bound by residues 164 to 166 (DAK), 230 to 231 (RF), Asp239, 245 to 246 (RK), Ala262, and Lys266. Residue Asp239 coordinates L-methionine. Residue Lys270 participates in L-methionine binding.

The protein belongs to the AdoMet synthase family. In terms of assembly, homotetramer; dimer of dimers. It depends on Mg(2+) as a cofactor. The cofactor is K(+).

The protein localises to the cytoplasm. It catalyses the reaction L-methionine + ATP + H2O = S-adenosyl-L-methionine + phosphate + diphosphate. Its pathway is amino-acid biosynthesis; S-adenosyl-L-methionine biosynthesis; S-adenosyl-L-methionine from L-methionine: step 1/1. In terms of biological role, catalyzes the formation of S-adenosylmethionine (AdoMet) from methionine and ATP. The overall synthetic reaction is composed of two sequential steps, AdoMet formation and the subsequent tripolyphosphate hydrolysis which occurs prior to release of AdoMet from the enzyme. This Haemophilus influenzae (strain ATCC 51907 / DSM 11121 / KW20 / Rd) protein is S-adenosylmethionine synthase.